The following is a 311-amino-acid chain: Apolipoprotein E (311 aa).

Positions 1–18 (MKALWAVLLVTLLTGCLA) are cleaved as a signal peptide. A run of 8 repeats spans residues 72-93 (ALMEDTMTEVKAYKKELEEQLG), 94-115 (PVAEETRARLGKEVQAAQARLG), 116-137 (ADMEDLRNRLGQYRNEVHTMLG), 138-159 (QSTEEIRARLSTHLRKMRKRLM), 160-181 (RDAEDLQKRLAVYKAGAREGAE), 182-203 (RGVSAIRERLGPLVEQGRQRTA), 204-225 (NLGAGAAQPLRDRAQAFGDRIR), and 226-247 (GRLEEVGNQARDRLEEVREHME). The tract at residues 72 to 247 (ALMEDTMTEV…RLEEVREHME (176 aa)) is 8 X 22 AA approximate tandem repeats. The residue at position 135 (methionine 135) is a Methionine sulfoxide. Serine 139 bears the Phosphoserine mark. Residues 150 to 160 (HLRKMRKRLMR) form an LDL and other lipoprotein receptors binding region. Residue 154–157 (MRKR) coordinates heparin. The segment at 202–282 (TANLGAGAAQ…GWFEPIVEDM (81 aa)) is lipid-binding and lipoprotein association. 221–228 (GDRIRGRL) serves as a coordination point for heparin. The segment at 258-311 (QQIRLQAEIFQARLKGWFEPIVEDMHRQWANLMEKIQASVATNPIITPVAQENQ) is homooligomerization. A specificity for association with VLDL region spans residues 270 to 282 (RLKGWFEPIVEDM).

It belongs to the apolipoprotein A1/A4/E family. As to quaternary structure, homotetramer. May interact with ABCA1; functionally associated with ABCA1 in the biogenesis of HDLs. May interact with APP/A4 amyloid-beta peptide; the interaction is extremely stable in vitro but its physiological significance is unclear. May interact with MAPT. May interact with MAP2. In the cerebrospinal fluid, interacts with secreted SORL1. Interacts with PMEL; this allows the loading of PMEL luminal fragment on ILVs to induce fibril nucleation. Post-translationally, APOE exists as multiple glycosylated and sialylated glycoforms within cells and in plasma. The extent of glycosylation and sialylation are tissue and context specific. In terms of processing, glycated in plasma VLDL. Phosphorylated by FAM20C in the extracellular medium.

It is found in the secreted. The protein resides in the extracellular space. Its subcellular location is the extracellular matrix. It localises to the extracellular vesicle. The protein localises to the endosome. It is found in the multivesicular body. Functionally, APOE is an apolipoprotein, a protein associating with lipid particles, that mainly functions in lipoprotein-mediated lipid transport between organs via the plasma and interstitial fluids. APOE is a core component of plasma lipoproteins and is involved in their production, conversion and clearance. Apolipoproteins are amphipathic molecules that interact both with lipids of the lipoprotein particle core and the aqueous environment of the plasma. As such, APOE associates with chylomicrons, chylomicron remnants, very low density lipoproteins (VLDL) and intermediate density lipoproteins (IDL) but shows a preferential binding to high-density lipoproteins (HDL). It also binds a wide range of cellular receptors including the LDL receptor/LDLR and the very low-density lipoprotein receptor/VLDLR that mediate the cellular uptake of the APOE-containing lipoprotein particles. Finally, APOE also has a heparin-binding activity and binds heparan-sulfate proteoglycans on the surface of cells, a property that supports the capture and the receptor-mediated uptake of APOE-containing lipoproteins by cells. The polypeptide is Apolipoprotein E (Apoe) (Mus musculus (Mouse)).